Here is a 254-residue protein sequence, read N- to C-terminus: Trypsin (254 aa).

Residues 1–16 (MLRFIAVFALVNCALA) form the signal peptide. Positions 17–26 (GTLPNDLDGR) are cleaved as a propeptide — activation peptide. Residues 27 to 252 (IVNGVDTTIE…VRSWIEKTAK (226 aa)) form the Peptidase S1 domain. Cys53 and Cys69 are disulfide-bonded. Catalysis depends on charge relay system residues His68 and Asp113. Cystine bridges form between Cys154/Cys158, Cys178/Cys195, and Cys204/Cys228. Ser208 (charge relay system) is an active-site residue.

It belongs to the peptidase S1 family.

It is found in the secreted. The protein resides in the extracellular space. It carries out the reaction Preferential cleavage: Arg-|-Xaa, Lys-|-Xaa.. Its function is as follows. Involved in digestion of a protein meal. The sequence is that of Trypsin from Sarcophaga bullata (Grey flesh fly).